Here is a 168-residue protein sequence, read N- to C-terminus: Disulfide bond formation protein B (168 aa).

The Cytoplasmic portion of the chain corresponds to 1–11 (MSNPMRPVRSI). The helical transmembrane segment at 12-28 (LLAIFTGCAGLIGYALY) threads the bilayer. Residues 29 to 46 (LQLVENLLPCPLCVVQRM) lie on the Periplasmic side of the membrane. Cys-38 and Cys-41 are disulfide-bonded. A helical membrane pass occupies residues 47–63 (AYWLIGLTALAGFFHTP). The Cytoplasmic segment spans residues 64-69 (ETTGRR). Residues 70 to 87 (IYAGLMAVFAFTGGLVAL) form a helical membrane-spanning segment. Over 88–143 (RQAWLVRYPEAFECGISPEEAFLNALPLARWWPVMFEANGDCADVTWKFASLTLPD) the chain is Periplasmic. Cysteines 101 and 129 form a disulfide. A helical membrane pass occupies residues 144–162 (WSAIFFMILAALSIYVLLV). The Cytoplasmic portion of the chain corresponds to 163–168 (RENQRE).

The protein belongs to the DsbB family.

Its subcellular location is the cell inner membrane. Functionally, required for disulfide bond formation in some periplasmic proteins. Acts by oxidizing the DsbA protein. The sequence is that of Disulfide bond formation protein B from Nitrosospira multiformis (strain ATCC 25196 / NCIMB 11849 / C 71).